We begin with the raw amino-acid sequence, 118 residues long: Cycloviolacin-O8 (118 aa).

Residues 1–22 (MEMKNMVVGLFLIAAFALPALA) form the signal peptide. A propeptide spanning residues 23-84 (TNFEKDFITH…THSNSINALG (62 aa)) is cleaved from the precursor. A cross-link (cyclopeptide (Gly-Asn)) is located at residues 85 to 115 (GTLPCGESCVWIPCISSVVGCSCKSKVCYKN). Disulfide bonds link C89-C105, C93-C107, and C98-C112. Residues 116–118 (SLA) constitute a propeptide that is removed on maturation.

Post-translationally, cycloviolacin-O8 is a cyclic peptide. As to expression, expressed in leaves, petals, petioles and roots but not in runners (at protein level).

Probably participates in a plant defense mechanism. In Viola odorata (Sweet violet), this protein is Cycloviolacin-O8 (Voc1).